The primary structure comprises 469 residues: Glutamine synthetase (469 aa).

Residues 14 to 99 (NDVKFVDLRF…VCDILDPVSG (86 aa)) enclose the GS beta-grasp domain. In terms of domain architecture, GS catalytic spans 106 to 469 (RRGTAKKAEA…PVEYDMYYSA (364 aa)). The Mg(2+) site is built by glutamate 131 and glutamate 133. Glutamate 209 serves as a coordination point for ATP. Mg(2+)-binding residues include glutamate 214 and aspartate 221. Residues 265-266 (NG) and glycine 266 contribute to the L-glutamate site. Histidine 270 contacts Mg(2+). ATP-binding positions include 272-274 (HQS) and serine 274. 3 residues coordinate L-glutamate: arginine 322, glutamate 328, and arginine 340. ATP-binding residues include arginine 340, arginine 345, and lysine 353. Glutamate 358 lines the Mg(2+) pocket. Arginine 360 contacts L-glutamate. Tyrosine 398 carries the O-AMP-tyrosine modification.

It belongs to the glutamine synthetase family. As to quaternary structure, oligomer of 12 subunits arranged in the form of two hexameric ring. Requires Mg(2+) as cofactor.

The protein resides in the cytoplasm. The enzyme catalyses L-glutamate + NH4(+) + ATP = L-glutamine + ADP + phosphate + H(+). With respect to regulation, the activity of this enzyme could be controlled by adenylation under conditions of abundant glutamine. Catalyzes the ATP-dependent biosynthesis of glutamine from glutamate and ammonia. The chain is Glutamine synthetase from Rhizobium leguminosarum bv. viciae.